Reading from the N-terminus, the 283-residue chain is Phosphate import ATP-binding protein PstB (283 aa).

Polar residues predominate over residues 1 to 20; sequence MAQTLAQTKQISQSHTFDVS. The interval 1–32 is disordered; it reads MAQTLAQTKQISQSHTFDVSQSHHKTPDDTNS. Residues 37 to 278 enclose the ABC transporter domain; it reads YSTQNLDLWY…PSNKKTEDYI (242 aa). 69 to 76 lines the ATP pocket; that stretch reads GPSGCGKS.

Belongs to the ABC transporter superfamily. Phosphate importer (TC 3.A.1.7) family. In terms of assembly, the complex is composed of two ATP-binding proteins (PstB), two transmembrane proteins (PstC and PstA) and a solute-binding protein (PstS).

The protein localises to the cell membrane. The enzyme catalyses phosphate(out) + ATP + H2O = ADP + 2 phosphate(in) + H(+). Its function is as follows. Part of the ABC transporter complex PstSACB involved in phosphate import. Responsible for energy coupling to the transport system. In Staphylococcus aureus (strain MRSA252), this protein is Phosphate import ATP-binding protein PstB.